A 344-amino-acid polypeptide reads, in one-letter code: Phosphoribosylformylglycinamidine cyclo-ligase (344 aa).

Belongs to the AIR synthase family.

The protein resides in the cytoplasm. It carries out the reaction 2-formamido-N(1)-(5-O-phospho-beta-D-ribosyl)acetamidine + ATP = 5-amino-1-(5-phospho-beta-D-ribosyl)imidazole + ADP + phosphate + H(+). It participates in purine metabolism; IMP biosynthesis via de novo pathway; 5-amino-1-(5-phospho-D-ribosyl)imidazole from N(2)-formyl-N(1)-(5-phospho-D-ribosyl)glycinamide: step 2/2. The chain is Phosphoribosylformylglycinamidine cyclo-ligase from Leptospira interrogans serogroup Icterohaemorrhagiae serovar Lai (strain 56601).